The primary structure comprises 358 residues: Chorismate synthase (358 aa).

The segment at 39-61 (ADIQPFLDKRRPGQSRHTTQRQE) is disordered. Residues Arg-48 and Arg-54 each contribute to the NADP(+) site. FMN contacts are provided by residues 125–127 (RSS), 237–238 (NA), Gly-284, 299–303 (KPTSS), and Arg-325.

This sequence belongs to the chorismate synthase family. In terms of assembly, homotetramer. FMNH2 serves as cofactor.

It catalyses the reaction 5-O-(1-carboxyvinyl)-3-phosphoshikimate = chorismate + phosphate. It participates in metabolic intermediate biosynthesis; chorismate biosynthesis; chorismate from D-erythrose 4-phosphate and phosphoenolpyruvate: step 7/7. In terms of biological role, catalyzes the anti-1,4-elimination of the C-3 phosphate and the C-6 proR hydrogen from 5-enolpyruvylshikimate-3-phosphate (EPSP) to yield chorismate, which is the branch point compound that serves as the starting substrate for the three terminal pathways of aromatic amino acid biosynthesis. This reaction introduces a second double bond into the aromatic ring system. This chain is Chorismate synthase, found in Sphingopyxis alaskensis (strain DSM 13593 / LMG 18877 / RB2256) (Sphingomonas alaskensis).